The following is a 113-amino-acid chain: Large ribosomal subunit protein uL22 (113 aa).

The protein belongs to the universal ribosomal protein uL22 family. In terms of assembly, part of the 50S ribosomal subunit.

Functionally, this protein binds specifically to 23S rRNA; its binding is stimulated by other ribosomal proteins, e.g. L4, L17, and L20. It is important during the early stages of 50S assembly. It makes multiple contacts with different domains of the 23S rRNA in the assembled 50S subunit and ribosome. The globular domain of the protein is located near the polypeptide exit tunnel on the outside of the subunit, while an extended beta-hairpin is found that lines the wall of the exit tunnel in the center of the 70S ribosome. The sequence is that of Large ribosomal subunit protein uL22 from Bacillus pumilus (strain SAFR-032).